We begin with the raw amino-acid sequence, 361 residues long: 3-dehydroquinate synthase (361 aa).

NAD(+) contacts are provided by residues Asn41, 70–75, 104–108, 128–129, Lys141, Lys150, 150–151, and 168–171; these read DGEQYK, GVIGD, TT, KN, and CLTT. Zn(2+)-binding residues include Glu183, His246, and His263.

Belongs to the sugar phosphate cyclases superfamily. Dehydroquinate synthase family. NAD(+) serves as cofactor. Co(2+) is required as a cofactor. It depends on Zn(2+) as a cofactor.

Its subcellular location is the cytoplasm. It catalyses the reaction 7-phospho-2-dehydro-3-deoxy-D-arabino-heptonate = 3-dehydroquinate + phosphate. Its pathway is metabolic intermediate biosynthesis; chorismate biosynthesis; chorismate from D-erythrose 4-phosphate and phosphoenolpyruvate: step 2/7. In terms of biological role, catalyzes the conversion of 3-deoxy-D-arabino-heptulosonate 7-phosphate (DAHP) to dehydroquinate (DHQ). The sequence is that of 3-dehydroquinate synthase from Vibrio cholerae serotype O1 (strain ATCC 39315 / El Tor Inaba N16961).